A 464-amino-acid chain; its full sequence is Fumarate hydratase class II (464 aa).

Substrate contacts are provided by residues 98-100 (SGT), 129-132 (HPND), 139-141 (SSN), and T187. H188 (proton donor/acceptor) is an active-site residue. S318 is an active-site residue. Substrate-binding positions include S319 and 324 to 326 (KVN).

It belongs to the class-II fumarase/aspartase family. Fumarase subfamily. Homotetramer.

It localises to the cytoplasm. The catalysed reaction is (S)-malate = fumarate + H2O. It functions in the pathway carbohydrate metabolism; tricarboxylic acid cycle; (S)-malate from fumarate: step 1/1. Functionally, involved in the TCA cycle. Catalyzes the stereospecific interconversion of fumarate to L-malate. The protein is Fumarate hydratase class II of Wigglesworthia glossinidia brevipalpis.